A 960-amino-acid polypeptide reads, in one-letter code: Leucine-rich repeat receptor-like serine/threonine-protein kinase SKM1 (960 aa).

Positions 1–29 are cleaved as a signal peptide; it reads MSTSHHHHHPPYLITTLFFLFLNFSCLHA. The Extracellular portion of the chain corresponds to 30-634; it reads NELELLLSFK…VRKRSTKSWW (605 aa). A disulfide bridge links cysteine 61 with cysteine 68. N-linked (GlcNAc...) asparagine glycosylation is found at asparagine 70, asparagine 83, asparagine 103, asparagine 108, asparagine 129, and asparagine 134. LRR repeat units lie at residues 71-96, 97-120, 122-146, 149-168, 169-194, 196-216, 217-240, 241-264, 265-288, 290-312, 313-336, 338-360, 361-384, 386-408, 409-432, 434-454, 455-477, 478-501, 503-525, 526-549, 550-573, and 575-598; these read ISRV…TFRL, PFLQ…IFTT, SPSL…FLPN, TLDL…IGVF, SNLR…NLSR, EFLT…LGKM, KNLK…IGGL, SSLN…LGDL, KKLE…IFSL, NLIS…VAQM, QSLE…VTSL, RLKV…LGKH, NNLT…LCDS, HLTK…LGMC, QSLE…FTKL, LVNF…TWDM, PQLE…FSRS, KRLK…LMTF, EIMD…LSSC, KNLV…FAEF, QVLS…LGNI, and SLVQ…AFLA. Asparagine 191 carries an N-linked (GlcNAc...) asparagine glycan. Residues 221 to 226 carry the CLE45 peptide binding motif; sequence WIYLGY. 2 N-linked (GlcNAc...) asparagine glycosylation sites follow: asparagine 228 and asparagine 252. Asparagine 324 carries N-linked (GlcNAc...) asparagine glycosylation. N-linked (GlcNAc...) asparagine glycans are attached at residues asparagine 362 and asparagine 372. N-linked (GlcNAc...) asparagine glycosylation occurs at asparagine 537. Asparagine 580 and asparagine 600 each carry an N-linked (GlcNAc...) asparagine glycan. The helical transmembrane segment at 635-655 threads the bilayer; it reads LIITSTFAAFLAVLVSGFFIV. Residues 656 to 960 are Cytoplasmic-facing; that stretch reads LVFQRTHNVL…TYLSKILSLA (305 aa). The Protein kinase domain maps to 691–953; it reads FTVNTILSSL…SSSSSCTTYL (263 aa). Phosphothreonine is present on threonine 692. ATP is bound by residues 697–705 and lysine 717; that span reads LSSLKDQNV. Position 834 is a phosphotyrosine (tyrosine 834).

This sequence belongs to the protein kinase superfamily. Ser/Thr protein kinase family. Self-interacts. Binds to CLE45 present in the pistil, particularly under relatively high temperature (at 30 degrees Celsius). Expressed in pollen grains and roots vascular tissues. Present in roots.

Its subcellular location is the cell membrane. The catalysed reaction is L-seryl-[protein] + ATP = O-phospho-L-seryl-[protein] + ADP + H(+). It catalyses the reaction L-threonyl-[protein] + ATP = O-phospho-L-threonyl-[protein] + ADP + H(+). In terms of biological role, receptor with a serine/threonine-protein kinase activity. Together with SKM2, LRR-rich receptor-like kinase (LRR-RLK) required for male fertility by the perception of CLE43 and CLE45 peptides and the transduction of their promoting action in pollen tubes, especially under relatively high temperature (at 30 degrees Celsius), thus conferring tolerance against high temperature probably through the maintenance of mitochondrial activity. Seems to not be involved in the perception of CLE45 peptide in roots. This is Leucine-rich repeat receptor-like serine/threonine-protein kinase SKM1 from Arabidopsis thaliana (Mouse-ear cress).